The primary structure comprises 347 residues: Peroxidase C2 (347 aa).

Positions 1–24 are cleaved as a signal peptide; the sequence is MHSSSSLIKLGFLLLLLNVSLSHA. 4 disulfide bridges follow: Cys-35/Cys-115, Cys-68/Cys-73, Cys-121/Cys-325, and Cys-201/Cys-233. The active-site Proton acceptor is the His-66. Ca(2+)-binding residues include Asp-67, Val-70, Gly-72, Asp-74, and Ser-76. Residue Asn-81 is glycosylated (N-linked (GlcNAc...) asparagine). Position 163 (Pro-163) interacts with substrate. His-194 lines the heme b pocket. Thr-195 provides a ligand contact to Ca(2+). N-linked (GlcNAc...) asparagine glycans are attached at residues Asn-210 and Asn-238. Positions 246, 249, and 254 each coordinate Ca(2+).

It belongs to the peroxidase family. Classical plant (class III) peroxidase subfamily. Requires Ca(2+) as cofactor. It depends on heme b as a cofactor.

It localises to the secreted. It is found in the vacuole. The enzyme catalyses 2 a phenolic donor + H2O2 = 2 a phenolic radical donor + 2 H2O. In terms of biological role, removal of H(2)O(2), oxidation of toxic reductants, biosynthesis and degradation of lignin, suberization, auxin catabolism, response to environmental stresses such as wounding, pathogen attack and oxidative stress. These functions might be dependent on each isozyme/isoform in each plant tissue. This chain is Peroxidase C2 (PRXC2), found in Armoracia rusticana (Horseradish).